The primary structure comprises 465 residues: Ribulose bisphosphate carboxylase large chain (465 aa).

Lysine 4 carries the N6,N6,N6-trimethyllysine modification. Residues asparagine 113 and threonine 163 each contribute to the substrate site. Lysine 165 (proton acceptor) is an active-site residue. Lysine 167 contacts substrate. Lysine 191, aspartate 193, and glutamate 194 together coordinate Mg(2+). N6-carboxylysine is present on lysine 191. Histidine 284 functions as the Proton acceptor in the catalytic mechanism. Substrate is bound by residues arginine 285, histidine 317, and serine 369.

The protein belongs to the RuBisCO large chain family. Type I subfamily. Heterohexadecamer of 8 large chains and 8 small chains; disulfide-linked. The disulfide link is formed within the large subunit homodimers. Requires Mg(2+) as cofactor. In terms of processing, the disulfide bond which can form in the large chain dimeric partners within the hexadecamer appears to be associated with oxidative stress and protein turnover.

The protein resides in the plastid. The protein localises to the chloroplast. It carries out the reaction 2 (2R)-3-phosphoglycerate + 2 H(+) = D-ribulose 1,5-bisphosphate + CO2 + H2O. The enzyme catalyses D-ribulose 1,5-bisphosphate + O2 = 2-phosphoglycolate + (2R)-3-phosphoglycerate + 2 H(+). Its function is as follows. RuBisCO catalyzes two reactions: the carboxylation of D-ribulose 1,5-bisphosphate, the primary event in carbon dioxide fixation, as well as the oxidative fragmentation of the pentose substrate in the photorespiration process. Both reactions occur simultaneously and in competition at the same active site. The sequence is that of Ribulose bisphosphate carboxylase large chain from Eucommia ulmoides (Hardy rubber tree).